A 205-amino-acid polypeptide reads, in one-letter code: Orotate phosphoribosyltransferase (205 aa).

116-124 (EDIITTGGS) contributes to the 5-phospho-alpha-D-ribose 1-diphosphate binding site. Orotate is bound by residues Thr-120 and Arg-148.

Belongs to the purine/pyrimidine phosphoribosyltransferase family. PyrE subfamily. Homodimer. Requires Mg(2+) as cofactor.

It catalyses the reaction orotidine 5'-phosphate + diphosphate = orotate + 5-phospho-alpha-D-ribose 1-diphosphate. It participates in pyrimidine metabolism; UMP biosynthesis via de novo pathway; UMP from orotate: step 1/2. Its function is as follows. Catalyzes the transfer of a ribosyl phosphate group from 5-phosphoribose 1-diphosphate to orotate, leading to the formation of orotidine monophosphate (OMP). The chain is Orotate phosphoribosyltransferase from Wolinella succinogenes (strain ATCC 29543 / DSM 1740 / CCUG 13145 / JCM 31913 / LMG 7466 / NCTC 11488 / FDC 602W) (Vibrio succinogenes).